A 118-amino-acid chain; its full sequence is NADH-quinone oxidoreductase subunit A 2 (118 aa).

A run of 3 helical transmembrane segments spans residues 5–25 (YLPI…SLVF), 60–80 (FYII…LYPW), and 87–107 (LGMF…VGYI).

The protein belongs to the complex I subunit 3 family. As to quaternary structure, NDH-1 is composed of 14 different subunits. Subunits NuoA, H, J, K, L, M, N constitute the membrane sector of the complex.

Its subcellular location is the cell inner membrane. It catalyses the reaction a quinone + NADH + 5 H(+)(in) = a quinol + NAD(+) + 4 H(+)(out). NDH-1 shuttles electrons from NADH, via FMN and iron-sulfur (Fe-S) centers, to quinones in the respiratory chain. The immediate electron acceptor for the enzyme in this species is believed to be ubiquinone. Couples the redox reaction to proton translocation (for every two electrons transferred, four hydrogen ions are translocated across the cytoplasmic membrane), and thus conserves the redox energy in a proton gradient. This is NADH-quinone oxidoreductase subunit A 2 from Geobacter metallireducens (strain ATCC 53774 / DSM 7210 / GS-15).